A 519-amino-acid polypeptide reads, in one-letter code: Voltage-gated potassium channel regulatory subunit KCNG4 (519 aa).

Positions 1 to 25 are disordered; it reads MPMPSRDGGLHPRHHHYGSHSPWSQ. The Cytoplasmic portion of the chain corresponds to 1–218; it reads MPMPSRDGGL…EMVENPQSGL (218 aa). A helical membrane pass occupies residues 219 to 240; the sequence is PGKVFACLSILFVATTAVSLCV. The Extracellular portion of the chain corresponds to 241–261; sequence STMPDLRAEEDQGECSRKCYY. A helical membrane pass occupies residues 262–283; that stretch reads IFIVETICVAWFSLEFCLRFVQ. Topologically, residues 284-294 are cytoplasmic; the sequence is AQDKCQFFQGP. The chain crosses the membrane as a helical span at residues 295–314; that stretch reads LNIIDILAISPYYVSLAVSE. Residues 315–328 lie on the Extracellular side of the membrane; it reads EPPEDGERPSGSSY. Residues 329 to 353 form a helical; Voltage-sensor membrane-spanning segment; the sequence is LEKVGLVLRVLRALRILYVMRLARH. The Cytoplasmic portion of the chain corresponds to 354-368; it reads SLGLQTLGLTVRRCT. The helical transmembrane segment at 369 to 390 threads the bilayer; sequence REFGLLLLFLAVAITLFSPLVY. The Extracellular segment spans residues 391–405; the sequence is VAEKESGRVLEFTSI. The segment at residues 406-417 is an intramembrane region (helical); that stretch reads PASYWWAIISMT. The Selectivity filter motif lies at 418–423; sequence TVGYGD. An intramembrane segment occupies 418–425; it reads TVGYGDMV. The Extracellular portion of the chain corresponds to 426–432; the sequence is PRSVPGQ. The chain crosses the membrane as a helical span at residues 433–461; it reads MVALSSILSGILIMAFPATSIFHTFSHSY. Residues 462 to 519 lie on the Cytoplasmic side of the membrane; it reads LELKKEQEQLQARLRHLQNTGPASECELLDPHVASEHELMNDVNDLILEGPALPIMHM.

It belongs to the potassium channel family. G (TC 1.A.1.2) subfamily. Kv6.4/KCNG4 sub-subfamily. In terms of assembly, heterotetramer with KCNB1. Does not form homomultimer. In terms of tissue distribution, highly expressed in brain, and at lower levels in liver, small intestine and colon.

Its subcellular location is the cell membrane. Functionally, regulatory subunit of the voltage-gated potassium (Kv) channel which, when coassembled with KCNB1, modulates the kinetics parameters of the heterotetrameric channel namely the time course of activation, deactivation and inactivation and on the voltage-dependence of activation. Potassium channel subunit that does not form functional channels by itself. Reduces the deactivation rate. Modulates the threshold for activation by shifting by approximately 20 mV in hyperpolarizing direction. Markedly changes the inactivation by shifting the voltage dependence of inactivation by approximately 40 mV in hyperpolarizing direction. Acceleratee activation and enhances the time course of activation. In Homo sapiens (Human), this protein is Voltage-gated potassium channel regulatory subunit KCNG4.